A 529-amino-acid chain; its full sequence is DnaJ homolog l(2)tid, mitochondrial (529 aa).

A mitochondrion-targeting transit peptide spans 1-22 (MISCKNLCVLRQLPLKNCRRHY). R35 is modified (omega-N-methylarginine). The region spanning 80-145 (DYYATLGVAK…QKRREYDTYG (66 aa)) is the J domain. N6-acetyllysine is present on K121. The CR-type zinc-finger motif lies at 230-308 (GVNKDVNVNV…CEGKGQTVQR (79 aa)). Positions 243, 246, 260, 263, 282, 285, 296, and 299 each coordinate Zn(2+). Residues 243-250 (CPKCAGSK) form a CXXCXGXG motif; approximate repeat. Residues 260-267 (CQYCNGTG) form a CXXCXGXG motif repeat. One copy of the CXXCXGXG motif; approximate repeat lies at 282 to 289 (CRYCQGTR). The stretch at 296 to 303 (CAECEGKG) is one CXXCXGXG motif repeat. A disordered region spans residues 441–529 (TPGQIHGMAQ…FLNKIKSMFN (89 aa)). Residues 497–508 (QSEKSETRRKDQ) are compositionally biased toward basic and acidic residues.

It is found in the mitochondrion outer membrane. In terms of biological role, may act as a tumor suppressor in larval imaginal disks. This is DnaJ homolog l(2)tid, mitochondrial (l(2)tid) from Drosophila virilis (Fruit fly).